Reading from the N-terminus, the 1715-residue chain is Ubiquitin carboxyl-terminal hydrolase 32 (1715 aa).

EF-hand domains are found at residues 161-196 (IPKN…ACRG) and 197-232 (PGVE…LLLV). Residues aspartate 174, asparagine 176, aspartate 178, histidine 180, glutamate 185, aspartate 210, aspartate 212, aspartate 214, and glutamate 221 each contribute to the Ca(2+) site. The 179-residue stretch at 314-492 (QCKHMENDIV…DNLPLPRQVI (179 aa)) folds into the DUSP domain. A disordered region spans residues 393-429 (QHDSYSLGSGTGSASGSGSASSGISAGRHCGPVRPGP). A compositionally biased stretch (low complexity) spans 408 to 419 (GSGSASSGISAG). A USP domain is found at 677-1675 (TGLHNLGNTC…AAYLLFYERK (999 aa)). Residue cysteine 686 is the Nucleophile of the active site. Composition is skewed to polar residues over residues 1103-1126 (TESN…SSLT) and 1150-1164 (YRTS…STGH). 2 disordered regions span residues 1103-1213 (TESN…PHKA) and 1536-1569 (DEID…GNIL). Acidic residues predominate over residues 1171–1180 (DVDEQAEEGN). The span at 1188–1209 (DQITTSQPETSSGVYSRRSSQP) shows a compositional bias: polar residues. The span at 1540 to 1549 (APSKEVKEEL) shows a compositional bias: basic and acidic residues. The span at 1550–1559 (PNQTGSTKAT) shows a compositional bias: polar residues. Catalysis depends on histidine 1633, which acts as the Proton acceptor.

This sequence belongs to the peptidase C19 family. USP20/USP33 subfamily.

The catalysed reaction is Thiol-dependent hydrolysis of ester, thioester, amide, peptide and isopeptide bonds formed by the C-terminal Gly of ubiquitin (a 76-residue protein attached to proteins as an intracellular targeting signal).. Its function is as follows. Deubiquitinating enzyme that acts as an inhibitor of mitophagy probably by counteracting the action of park. Possibly functions by hydrolyzing ubiquitin attached by park on target proteins, thereby reducing park's ability to drive mitophagy. This is Ubiquitin carboxyl-terminal hydrolase 32 from Drosophila melanogaster (Fruit fly).